A 329-amino-acid chain; its full sequence is Meiotic drive suppressor wtf21 (329 aa).

Positions 1–68 (MKNNYTSLKS…RENNPSRSTD (68 aa)) are disordered. Positions 19–30 (KTDHEIDLEKGP) are enriched in basic and acidic residues. The next 5 membrane-spanning stretches (helical) occupy residues 73–95 (FLIK…ICYL), 110–132 (WTLF…YFYE), 165–182 (IIIW…FVYI), 192–214 (ALIC…VCIP), and 290–312 (GIAF…IRGA).

The protein belongs to the WTF family. As to quaternary structure, homomer. Interacts with other proteins that exhibit high sequence similarity.

It is found in the spore membrane. The protein localises to the vacuole membrane. In terms of biological role, acts as a suppressor component of the dual wtf meiotic drive system, and can suppress but not confer meiotic drive by compatible poisons. Wtf meiotic drive systems promote unequal transmission of alleles from the parental zygote to progeny spores by encoding a poison and an antidote from the same locus; the poison is trans-acting and forms toxic aggregates in all spores within an ascus, wherease the antidote is spore-specific and targets aggregates for degradation by the vacuole. Meiotic drive by wtf systems therefore lead to poisoning of all progeny that do not inherit the dual poison/antidote allele, or express a compatible antidote. This is Meiotic drive suppressor wtf21 from Schizosaccharomyces pombe (strain 972 / ATCC 24843) (Fission yeast).